The sequence spans 425 residues: Histidine--tRNA ligase (425 aa).

The protein belongs to the class-II aminoacyl-tRNA synthetase family. As to quaternary structure, homodimer.

The protein resides in the cytoplasm. It catalyses the reaction tRNA(His) + L-histidine + ATP = L-histidyl-tRNA(His) + AMP + diphosphate + H(+). This Desulforapulum autotrophicum (strain ATCC 43914 / DSM 3382 / VKM B-1955 / HRM2) (Desulfobacterium autotrophicum) protein is Histidine--tRNA ligase.